A 134-amino-acid chain; its full sequence is Protein PsiB (134 aa).

In terms of biological role, could be involved directly or indirectly in exopolysaccharide synthesis. This is Protein PsiB (psiB) from Rhizobium leguminosarum bv. phaseoli.